The primary structure comprises 564 residues: Probable beta-glucosidase btgE (564 aa).

Positions 1-18 (MRGAFLATAAAIAGTAMA) are cleaved as a signal peptide. A disordered region spans residues 285-304 (ATSSVAPSSSPSKPAAPSGA). N-linked (GlcNAc...) asparagine glycosylation occurs at Asn404. The active-site Proton donor is the Glu405. Catalysis depends on Glu501, which acts as the Nucleophile.

Belongs to the glycosyl hydrolase 17 family.

It is found in the secreted. The protein resides in the cell wall. It carries out the reaction Hydrolysis of terminal, non-reducing beta-D-glucosyl residues with release of beta-D-glucose.. It participates in glycan metabolism; cellulose degradation. Functionally, beta-glucosidases are one of a number of cellulolytic enzymes involved in the degradation of cellulosic biomass. Catalyzes the last step releasing glucose from the inhibitory cellobiose. In Aspergillus clavatus (strain ATCC 1007 / CBS 513.65 / DSM 816 / NCTC 3887 / NRRL 1 / QM 1276 / 107), this protein is Probable beta-glucosidase btgE (btgE).